Consider the following 341-residue polypeptide: RNA 3'-terminal phosphate cyclase (341 aa).

Residues Q100 and 283 to 287 each bind ATP; that span reads FLGDQ. Catalysis depends on H307, which acts as the Tele-AMP-histidine intermediate.

The protein belongs to the RNA 3'-terminal cyclase family. Type 1 subfamily.

It localises to the cytoplasm. The enzyme catalyses a 3'-end 3'-phospho-ribonucleotide-RNA + ATP = a 3'-end 2',3'-cyclophospho-ribonucleotide-RNA + AMP + diphosphate. In terms of biological role, catalyzes the conversion of 3'-phosphate to a 2',3'-cyclic phosphodiester at the end of RNA. The mechanism of action of the enzyme occurs in 3 steps: (A) adenylation of the enzyme by ATP; (B) transfer of adenylate to an RNA-N3'P to produce RNA-N3'PP5'A; (C) and attack of the adjacent 2'-hydroxyl on the 3'-phosphorus in the diester linkage to produce the cyclic end product. The biological role of this enzyme is unknown but it is likely to function in some aspects of cellular RNA processing. This is RNA 3'-terminal phosphate cyclase (rtcA) from Pyrococcus horikoshii (strain ATCC 700860 / DSM 12428 / JCM 9974 / NBRC 100139 / OT-3).